A 216-amino-acid polypeptide reads, in one-letter code: RNA pyrophosphohydrolase (216 aa).

Residues 6-149 form the Nudix hydrolase domain; sequence GFRPNVGIIL…KRDVYQLALT (144 aa). The Nudix box signature appears at 38-59; the sequence is GGIKYGETPMQAMYRELHEETG. A disordered region spans residues 159-191; it reads AQRTDKSRGPRAPRYPRVANGHAASETPAAIDT.

It belongs to the Nudix hydrolase family. RppH subfamily. Requires a divalent metal cation as cofactor.

In terms of biological role, accelerates the degradation of transcripts by removing pyrophosphate from the 5'-end of triphosphorylated RNA, leading to a more labile monophosphorylated state that can stimulate subsequent ribonuclease cleavage. The protein is RNA pyrophosphohydrolase of Burkholderia pseudomallei (strain 668).